We begin with the raw amino-acid sequence, 235 residues long: MPKHGKKYRSAAALVDRNKLYDPMEALELVKKTATANFDETIEVAYRLGVDVRHADQQIRGAVVLPGGTGKEVKVLVFAKGEKAKEAEAAGADYVGAEDLVAKIQEGWLDFDVAVATPDMMSLVGRLGRILGPRGLMPNPKTGTVTFDVANAIQEIKAGKVEYRTDKAGIVAAPIGKASFDVERLAANFRALTEALLRAKPAAAKGQYMKSVTISATMGPGIKVNPARLTATAEK.

The protein belongs to the universal ribosomal protein uL1 family. Part of the 50S ribosomal subunit.

Its function is as follows. Binds directly to 23S rRNA. The L1 stalk is quite mobile in the ribosome, and is involved in E site tRNA release. Functionally, protein L1 is also a translational repressor protein, it controls the translation of the L11 operon by binding to its mRNA. This chain is Large ribosomal subunit protein uL1, found in Symbiobacterium thermophilum (strain DSM 24528 / JCM 14929 / IAM 14863 / T).